Reading from the N-terminus, the 521-residue chain is Bifunctional purine biosynthesis protein PurH (521 aa).

The region spanning 1 to 147 is the MGS-like domain; the sequence is MAVIKRALIS…KNNRDVTVVV (147 aa).

Belongs to the PurH family.

The catalysed reaction is (6R)-10-formyltetrahydrofolate + 5-amino-1-(5-phospho-beta-D-ribosyl)imidazole-4-carboxamide = 5-formamido-1-(5-phospho-D-ribosyl)imidazole-4-carboxamide + (6S)-5,6,7,8-tetrahydrofolate. The enzyme catalyses IMP + H2O = 5-formamido-1-(5-phospho-D-ribosyl)imidazole-4-carboxamide. The protein operates within purine metabolism; IMP biosynthesis via de novo pathway; 5-formamido-1-(5-phospho-D-ribosyl)imidazole-4-carboxamide from 5-amino-1-(5-phospho-D-ribosyl)imidazole-4-carboxamide (10-formyl THF route): step 1/1. It participates in purine metabolism; IMP biosynthesis via de novo pathway; IMP from 5-formamido-1-(5-phospho-D-ribosyl)imidazole-4-carboxamide: step 1/1. In Syntrophotalea carbinolica (strain DSM 2380 / NBRC 103641 / GraBd1) (Pelobacter carbinolicus), this protein is Bifunctional purine biosynthesis protein PurH.